We begin with the raw amino-acid sequence, 341 residues long: tRNA N6-adenosine threonylcarbamoyltransferase (341 aa).

2 residues coordinate Fe cation: H112 and H116. Substrate contacts are provided by residues 134–138 (LASGG), D167, G180, and N279. D307 provides a ligand contact to Fe cation.

It belongs to the KAE1 / TsaD family. Fe(2+) is required as a cofactor.

It is found in the cytoplasm. It carries out the reaction L-threonylcarbamoyladenylate + adenosine(37) in tRNA = N(6)-L-threonylcarbamoyladenosine(37) in tRNA + AMP + H(+). Required for the formation of a threonylcarbamoyl group on adenosine at position 37 (t(6)A37) in tRNAs that read codons beginning with adenine. Is involved in the transfer of the threonylcarbamoyl moiety of threonylcarbamoyl-AMP (TC-AMP) to the N6 group of A37, together with TsaE and TsaB. TsaD likely plays a direct catalytic role in this reaction. This is tRNA N6-adenosine threonylcarbamoyltransferase from Rickettsia bellii (strain OSU 85-389).